The primary structure comprises 1887 residues: DNA-directed RNA polymerase II subunit RPB1 (1887 aa).

Cysteine 67, cysteine 70, cysteine 77, histidine 80, cysteine 107, cysteine 110, cysteine 150, and cysteine 176 together coordinate Zn(2+). Residues methionine 156–histidine 178 form a disordered region. Residues aspartate 487, aspartate 489, and aspartate 491 each contribute to the Mg(2+) site. Residues proline 825–glutamate 837 form a bridging helix region. Lysine 1260 participates in a covalent cross-link: Glycyl lysine isopeptide (Lys-Gly) (interchain with G-Cter in ubiquitin). Disordered regions lie at residues threonine 1528 to methionine 1565 and tyrosine 1579 to aspartate 1887. 3 stretches are compositionally biased toward low complexity: residues proline 1529–methionine 1565, tyrosine 1579–proline 1610, and proline 1626–glutamine 1650. Copy 1 of the repeat occupies tyrosine 1579–asparagine 1585. A C-terminal domain (CTD); 32 X 7 AA approximate tandem repeats of Y-[ST]-P-[STNVAPGN]-[STGMA]-[PSTR]-[SNAGCQKTLRIMH] region spans residues tyrosine 1579–threonine 1881. The stretch at tyrosine 1586 to glycine 1592 is one 2; approximate repeat. A run of 4 repeats spans residues tyrosine 1598–asparagine 1604, tyrosine 1605–leucine 1611, tyrosine 1631–glycine 1637, and tyrosine 1638–valine 1644. Residues phenylalanine 1651–isoleucine 1664 are compositionally biased toward polar residues. Residues tyrosine 1665 to threonine 1760 are compositionally biased toward low complexity. A run of 17 repeats spans residues tyrosine 1671 to asparagine 1677, tyrosine 1678 to serine 1684, tyrosine 1685 to serine 1691, tyrosine 1692 to serine 1698, tyrosine 1699 to cysteine 1705, tyrosine 1706 to serine 1712, tyrosine 1713 to asparagine 1719, tyrosine 1720 to serine 1726, tyrosine 1727 to asparagine 1733, tyrosine 1740 to alanine 1746, tyrosine 1754 to threonine 1760, tyrosine 1761 to serine 1767, tyrosine 1777 to glutamine 1783, tyrosine 1784 to lysine 1790, tyrosine 1791 to leucine 1797, tyrosine 1798 to glutamine 1804, and tyrosine 1811 to threonine 1817. Positions glutamine 1776–proline 1786 are enriched in polar residues. Positions serine 1788–proline 1813 are enriched in low complexity. Residues threonine 1814–isoleucine 1831 are compositionally biased toward polar residues. One copy of the 24; approximate repeat lies at tyrosine 1818 to arginine 1824. Repeat copies occupy residues tyrosine 1825 to isoleucine 1831, tyrosine 1832 to lysine 1838, tyrosine 1839 to threonine 1845, tyrosine 1846 to asparagine 1852, tyrosine 1853 to methionine 1859, tyrosine 1860 to serine 1866, tyrosine 1868 to alanine 1874, and tyrosine 1875 to threonine 1881. The span at tyrosine 1832–threonine 1849 shows a compositional bias: low complexity. Residues alanine 1850–methionine 1859 are compositionally biased toward polar residues. A compositionally biased stretch (low complexity) spans tyrosine 1860–threonine 1881.

Belongs to the RNA polymerase beta' chain family. As to quaternary structure, component of the RNA polymerase II (Pol II) complex consisting of 12 subunits. In terms of processing, the tandem 7 residues repeats in the C-terminal domain (CTD) can be highly phosphorylated. The phosphorylation activates Pol II. Phosphorylation occurs mainly at residues 'Ser-2' and 'Ser-5' of the heptapeptide repeat. The phosphorylation state is believed to result from the balanced action of site-specific CTD kinases and phosphatase, and a 'CTD code' that specifies the position of Pol II within the transcription cycle has been proposed. Post-translationally, following transcription stress, the elongating form of RNA polymerase II (RNA pol IIo) is polyubiquitinated via 'Lys-63'-linkages on Lys-1260 at DNA damage sites without leading to degradation: ubiquitination promotes RNA pol IIo backtracking to allow access by the transcription-coupled nucleotide excision repair (TC-NER) machinery. Subsequent DEF1-dependent polyubiquitination by the elongin complex via 'Lys-48'-linkages may lead to proteasome-mediated degradation; presumably at stalled RNA pol II where TC-NER has failed, to halt global transcription and enable 'last resort' DNA repair pathways.

It localises to the nucleus. The catalysed reaction is RNA(n) + a ribonucleoside 5'-triphosphate = RNA(n+1) + diphosphate. Its function is as follows. DNA-dependent RNA polymerase catalyzes the transcription of DNA into RNA using the four ribonucleoside triphosphates as substrates. Largest and catalytic component of RNA polymerase II which synthesizes mRNA precursors and many functional non-coding RNAs. Forms the polymerase active center together with the second largest subunit. Pol II is the central component of the basal RNA polymerase II transcription machinery. It is composed of mobile elements that move relative to each other. RPB1 is part of the core element with the central large cleft, the clamp element that moves to open and close the cleft and the jaws that are thought to grab the incoming DNA template. At the start of transcription, a single-stranded DNA template strand of the promoter is positioned within the central active site cleft of Pol II. A bridging helix emanates from RPB1 and crosses the cleft near the catalytic site and is thought to promote translocation of Pol II by acting as a ratchet that moves the RNA-DNA hybrid through the active site by switching from straight to bent conformations at each step of nucleotide addition. During transcription elongation, Pol II moves on the template as the transcript elongates. Elongation is influenced by the phosphorylation status of the C-terminal domain (CTD) of Pol II largest subunit (RPB1), which serves as a platform for assembly of factors that regulate transcription initiation, elongation, termination and mRNA processing. In Drosophila melanogaster (Fruit fly), this protein is DNA-directed RNA polymerase II subunit RPB1.